A 356-amino-acid chain; its full sequence is MCILTLVERKHLKNMVHVRLLVMMHILIIYSTFGAVRRPINIRVLEGNSCDTPQVIGGKCMNISLCDPAFVHSIAYQEHTPVCQQNAFYRVICCQPFLDFCENSKQFQIMHGIEAEPGMFPHLARLGLKSEEDGIAWTCSANIISERFLLTAAHCNPVNIAGLGCAESMQCDQQNTVKSFISNPKYKTSFKYHDIALVELEQNIRFNKRVLPICPYISKTDLHESEDLVIAGWGATESHFQSPRLMFATVRTVLQNDCKDHYASLLKASPNKKLHQGITDEMYCAQGALVDNVTEYIDACSGDSGGPLQTKQNNNLYLIGVISTGFGCGSSSPGLYTRVASYFGWIKETVSATRDN.

A Clip domain is found at 49–94 (SCDTPQVIGGKCMNISLCDPAFVHSIAYQEHTPVCQQNAFYRVICC). 4 cysteine pairs are disulfide-bonded: Cys50-Cys93, Cys60-Cys83, Cys66-Cys94, and Cys139-Cys155. N-linked (GlcNAc...) asparagine glycosylation is present at Asn62. The Peptidase S1 domain maps to 109 to 351 (IMHGIEAEPG…YFGWIKETVS (243 aa)). Catalysis depends on charge relay system residues His154 and Asp194. A disulfide bond links Cys258 and Cys284. Residue Asn292 is glycosylated (N-linked (GlcNAc...) asparagine). Cys300 and Cys328 are oxidised to a cystine. The Charge relay system role is filled by Ser304.

Belongs to the peptidase S1 family. CLIP subfamily. In terms of assembly, in the active form, heterodimer of a p12 subunit and a p30 subunit; disulfide-linked. Secreted as a full-length protein. Following bacterium E.coli infection, proteolytically cleaved into two chains, p12 and p30, which remain covalently linked.

The protein localises to the secreted. Functionally, probable serine protease which plays an essential role in the innate immune response against bacteria and protozoa infection by activating the melanization cascade. In the susceptible strain G3, appears to be dispensable for ookinete elimination which occurs by lysis. The polypeptide is CLIP domain-containing serine protease C9 (Anopheles gambiae (African malaria mosquito)).